A 118-amino-acid polypeptide reads, in one-letter code: D-dopachrome decarboxylase (118 aa).

Pro-2 carries the N-acetylproline modification. Lys-33 bears the N6-acetyllysine mark. Phosphoserine is present on Ser-90.

This sequence belongs to the MIF family. In terms of assembly, homotrimer.

It localises to the cytoplasm. The enzyme catalyses D-dopachrome + H(+) = 5,6-dihydroxyindole + CO2. In terms of biological role, tautomerization of D-dopachrome with decarboxylation to give 5,6-dihydroxyindole (DHI). This Mus musculus (Mouse) protein is D-dopachrome decarboxylase (Ddt).